Consider the following 160-residue polypeptide: MMERFEKIEMKIPAKAEYVAIIRLTMAGVANRMGFAYDDIEDMKIAISEACTNIVQHAYKEDVGEIAIVFGLYEDRLEIMVADNGVSFDFNNLKRKVGPYDISKPVEHLPENGLGLYLINTLMDDIQIMHDEGMTVLMTKYIQREQVENDGNPISTYESY.

Belongs to the anti-sigma-factor family.

The enzyme catalyses L-seryl-[protein] + ATP = O-phospho-L-seryl-[protein] + ADP + H(+). It carries out the reaction L-threonyl-[protein] + ATP = O-phospho-L-threonyl-[protein] + ADP + H(+). In terms of biological role, negative regulator of sigma-B activity. Phosphorylates and inactivates its specific antagonist protein, RsbV. Upon phosphorylation of RsbV, RsbW is released and binds to sigma-B, thereby blocking its ability to form an RNA polymerase holoenzyme (E-sigma-B). The chain is Serine-protein kinase RsbW from Bacillus cereus (strain ZK / E33L).